The primary structure comprises 321 residues: Lipoyl synthase (321 aa).

[4Fe-4S] cluster contacts are provided by C68, C73, C79, C94, C98, C101, and S308. The Radical SAM core domain occupies 80 to 297; the sequence is FNHGTATFMI…KAAAMDMGFT (218 aa).

The protein belongs to the radical SAM superfamily. Lipoyl synthase family. [4Fe-4S] cluster is required as a cofactor.

Its subcellular location is the cytoplasm. It catalyses the reaction [[Fe-S] cluster scaffold protein carrying a second [4Fe-4S](2+) cluster] + N(6)-octanoyl-L-lysyl-[protein] + 2 oxidized [2Fe-2S]-[ferredoxin] + 2 S-adenosyl-L-methionine + 4 H(+) = [[Fe-S] cluster scaffold protein] + N(6)-[(R)-dihydrolipoyl]-L-lysyl-[protein] + 4 Fe(3+) + 2 hydrogen sulfide + 2 5'-deoxyadenosine + 2 L-methionine + 2 reduced [2Fe-2S]-[ferredoxin]. It participates in protein modification; protein lipoylation via endogenous pathway; protein N(6)-(lipoyl)lysine from octanoyl-[acyl-carrier-protein]: step 2/2. Its function is as follows. Catalyzes the radical-mediated insertion of two sulfur atoms into the C-6 and C-8 positions of the octanoyl moiety bound to the lipoyl domains of lipoate-dependent enzymes, thereby converting the octanoylated domains into lipoylated derivatives. This chain is Lipoyl synthase, found in Erwinia tasmaniensis (strain DSM 17950 / CFBP 7177 / CIP 109463 / NCPPB 4357 / Et1/99).